The following is a 416-amino-acid chain: 3-isopropylmalate dehydratase large subunit (416 aa).

[4Fe-4S] cluster contacts are provided by cysteine 297, cysteine 357, and cysteine 360.

The protein belongs to the aconitase/IPM isomerase family. LeuC type 2 subfamily. In terms of assembly, heterodimer of LeuC and LeuD. It depends on [4Fe-4S] cluster as a cofactor.

The enzyme catalyses (2R,3S)-3-isopropylmalate = (2S)-2-isopropylmalate. The protein operates within amino-acid biosynthesis; L-leucine biosynthesis; L-leucine from 3-methyl-2-oxobutanoate: step 2/4. Functionally, catalyzes the isomerization between 2-isopropylmalate and 3-isopropylmalate, via the formation of 2-isopropylmaleate. The sequence is that of 3-isopropylmalate dehydratase large subunit from Methanoregula boonei (strain DSM 21154 / JCM 14090 / 6A8).